Consider the following 390-residue polypeptide: Glutamyl-tRNA reductase (390 aa).

Residues 46–49 (TCNR), Ser96, 101–103 (EAQ), and Gln107 contribute to the substrate site. The active-site Nucleophile is Cys47. 176–181 (GAGEMA) is a binding site for NADP(+).

The protein belongs to the glutamyl-tRNA reductase family. As to quaternary structure, homodimer.

It catalyses the reaction (S)-4-amino-5-oxopentanoate + tRNA(Glu) + NADP(+) = L-glutamyl-tRNA(Glu) + NADPH + H(+). It participates in porphyrin-containing compound metabolism; protoporphyrin-IX biosynthesis; 5-aminolevulinate from L-glutamyl-tRNA(Glu): step 1/2. Catalyzes the NADPH-dependent reduction of glutamyl-tRNA(Glu) to glutamate 1-semialdehyde (GSA). The polypeptide is Glutamyl-tRNA reductase (Thermus thermophilus (strain ATCC BAA-163 / DSM 7039 / HB27)).